Here is a 31-residue protein sequence, read N- to C-terminus: Ice-structuring glycoprotein 3 (31 aa).

10 O-linked (GalNAc...) threonine glycosylation sites follow: T3, T6, T9, T12, T15, T18, T21, T24, T27, and T30.

O-linked glycans consist of Gal-GalNAc disaccharides. The three proteins may differ only in the number of repeating units of -Ala-Ala-Thr-.

The protein localises to the secreted. In terms of biological role, antifreeze proteins lower the blood freezing point. This fish lives in antarctic waters where it experiences water temperatures near -1.9 degrees Celsius. Its blood has a freezing point of about -2.0 degrees Celsius, and 30% of the freezing-point depression is due mainly to the 3 major high molecular weight glycoproteins in the plasma. This Pagothenia borchgrevinki (Bald rockcod) protein is Ice-structuring glycoprotein 3.